Here is a 98-residue protein sequence, read N- to C-terminus: Integration host factor subunit alpha (98 aa).

Residues 49 to 70 (FGNFDLRDKNQRPGRNPKTGED) form a disordered region.

The protein belongs to the bacterial histone-like protein family. Heterodimer of an alpha and a beta chain.

In terms of biological role, this protein is one of the two subunits of integration host factor, a specific DNA-binding protein that functions in genetic recombination as well as in transcriptional and translational control. In Shewanella baltica (strain OS223), this protein is Integration host factor subunit alpha.